The following is a 407-amino-acid chain: Polygalacturonase (407 aa).

Residues 1-26 (MAPHLNIVPSMFVLLLLFISASKVQS) form the signal peptide. PbH1 repeat units follow at residues 180–206 (CKNI…HMGK) and 207–228 (SEGV…SIGD). An N-linked (GlcNAc...) asparagine glycan is attached at asparagine 182. The active-site Proton donor is the aspartate 221. Cysteine 223 and cysteine 240 are joined by a disulfide. Residue histidine 244 is part of the active site. 2 PbH1 repeats span residues 260 to 281 (VEGI…RIKT) and 290 to 311 (VSEI…LIDQ). 4 N-linked (GlcNAc...) asparagine glycosylation sites follow: asparagine 267, asparagine 272, asparagine 302, and asparagine 331. 2 disulfides stabilise this stretch: cysteine 351/cysteine 357 and cysteine 379/cysteine 395. Residues 357-384 (CQNVELADIDIKHNGAEPATSQCLNVKP) form a PbH1 5 repeat.

Belongs to the glycosyl hydrolase 28 family. In terms of tissue distribution, pollen.

It localises to the secreted. It is found in the cell wall. The catalysed reaction is (1,4-alpha-D-galacturonosyl)n+m + H2O = (1,4-alpha-D-galacturonosyl)n + (1,4-alpha-D-galacturonosyl)m.. Functionally, may function in the depolymerization of the pectin in its walls during pollen tube elongation, or in that of the pistil during pollination. The sequence is that of Polygalacturonase (G9) from Gossypium hirsutum (Upland cotton).